Consider the following 273-residue polypeptide: Putative phosphoenolpyruvate synthase regulatory protein (273 aa).

An ADP-binding site is contributed by 153–160 (GVSRSGKT).

Belongs to the pyruvate, phosphate/water dikinase regulatory protein family. PSRP subfamily.

It catalyses the reaction [pyruvate, water dikinase] + ADP = [pyruvate, water dikinase]-phosphate + AMP + H(+). The enzyme catalyses [pyruvate, water dikinase]-phosphate + phosphate + H(+) = [pyruvate, water dikinase] + diphosphate. Bifunctional serine/threonine kinase and phosphorylase involved in the regulation of the phosphoenolpyruvate synthase (PEPS) by catalyzing its phosphorylation/dephosphorylation. In Polaromonas sp. (strain JS666 / ATCC BAA-500), this protein is Putative phosphoenolpyruvate synthase regulatory protein.